The sequence spans 236 residues: Ubiquinone biosynthesis O-methyltransferase (236 aa).

Residues Arg-39, Gly-59, Asp-80, and Met-124 each contribute to the S-adenosyl-L-methionine site.

The protein belongs to the methyltransferase superfamily. UbiG/COQ3 family.

It carries out the reaction a 3-demethylubiquinol + S-adenosyl-L-methionine = a ubiquinol + S-adenosyl-L-homocysteine + H(+). The enzyme catalyses a 3-(all-trans-polyprenyl)benzene-1,2-diol + S-adenosyl-L-methionine = a 2-methoxy-6-(all-trans-polyprenyl)phenol + S-adenosyl-L-homocysteine + H(+). It functions in the pathway cofactor biosynthesis; ubiquinone biosynthesis. Its function is as follows. O-methyltransferase that catalyzes the 2 O-methylation steps in the ubiquinone biosynthetic pathway. In Shewanella sp. (strain MR-4), this protein is Ubiquinone biosynthesis O-methyltransferase.